Here is a 162-residue protein sequence, read N- to C-terminus: Thy-1 membrane glycoprotein (162 aa).

Positions 1–19 are cleaved as a signal peptide; the sequence is MNPAISVALLLSVLQVSRG. Position 20 is a pyrrolidone carboxylic acid (glutamine 20). An Ig-like V-type domain is found at 20 to 127; it reads QKVTSLTACL…NKSISVYRDK (108 aa). Cystine bridges form between cysteine 28–cysteine 131 and cysteine 38–cysteine 105. Residues asparagine 42, asparagine 94, and asparagine 118 are each glycosylated (N-linked (GlcNAc...) asparagine). Cysteine 131 carries the GPI-anchor amidated cysteine; alternate lipid modification. Residues 132 to 162 constitute a propeptide, removed in mature form; the sequence is GGISLLVQNTSWMLLLLLSLSLLQALDFISL.

It localises to the cell membrane. May play a role in cell-cell or cell-ligand interactions during synaptogenesis and other events in the brain. The polypeptide is Thy-1 membrane glycoprotein (Thy1) (Mus musculus (Mouse)).